Consider the following 202-residue polypeptide: Imidazoleglycerol-phosphate dehydratase (202 aa).

This sequence belongs to the imidazoleglycerol-phosphate dehydratase family.

It localises to the cytoplasm. It carries out the reaction D-erythro-1-(imidazol-4-yl)glycerol 3-phosphate = 3-(imidazol-4-yl)-2-oxopropyl phosphate + H2O. Its pathway is amino-acid biosynthesis; L-histidine biosynthesis; L-histidine from 5-phospho-alpha-D-ribose 1-diphosphate: step 6/9. This chain is Imidazoleglycerol-phosphate dehydratase, found in Brucella abortus (strain S19).